A 479-amino-acid chain; its full sequence is Ribosomal RNA small subunit methyltransferase F (479 aa).

Residues 125–131 (AAAPGSK), E149, D176, and D194 each bind S-adenosyl-L-methionine. Residue C247 is the Nucleophile of the active site.

The protein belongs to the class I-like SAM-binding methyltransferase superfamily. RsmB/NOP family.

The protein localises to the cytoplasm. The enzyme catalyses cytidine(1407) in 16S rRNA + S-adenosyl-L-methionine = 5-methylcytidine(1407) in 16S rRNA + S-adenosyl-L-homocysteine + H(+). Functionally, specifically methylates the cytosine at position 1407 (m5C1407) of 16S rRNA. The chain is Ribosomal RNA small subunit methyltransferase F (rsmF) from Escherichia coli (strain K12).